The chain runs to 198 residues: Protein GrpE (198 aa).

Residues 1–14 (MSNEENKINEEALK) are compositionally biased toward basic and acidic residues. Positions 1-20 (MSNEENKINEEALKQQDAAE) are disordered.

It belongs to the GrpE family. As to quaternary structure, homodimer.

The protein resides in the cytoplasm. Participates actively in the response to hyperosmotic and heat shock by preventing the aggregation of stress-denatured proteins, in association with DnaK and GrpE. It is the nucleotide exchange factor for DnaK and may function as a thermosensor. Unfolded proteins bind initially to DnaJ; upon interaction with the DnaJ-bound protein, DnaK hydrolyzes its bound ATP, resulting in the formation of a stable complex. GrpE releases ADP from DnaK; ATP binding to DnaK triggers the release of the substrate protein, thus completing the reaction cycle. Several rounds of ATP-dependent interactions between DnaJ, DnaK and GrpE are required for fully efficient folding. The polypeptide is Protein GrpE (Vibrio vulnificus (strain YJ016)).